The following is a 165-amino-acid chain: uncharacterized protein (165 aa).

This is an uncharacterized protein from Saccharomyces cerevisiae (strain ATCC 204508 / S288c) (Baker's yeast).